The sequence spans 311 residues: GTP cyclohydrolase MptA (311 aa).

The protein belongs to the GTP cyclohydrolase IV family. Homodimer. The cofactor is Fe(2+).

It catalyses the reaction GTP + H2O = 7,8-dihydroneopterin 2',3'-cyclic phosphate + formate + diphosphate + H(+). The protein operates within cofactor biosynthesis; 5,6,7,8-tetrahydromethanopterin biosynthesis. In terms of biological role, converts GTP to 7,8-dihydro-D-neopterin 2',3'-cyclic phosphate, the first intermediate in the biosynthesis of coenzyme methanopterin. This Methanocorpusculum labreanum (strain ATCC 43576 / DSM 4855 / Z) protein is GTP cyclohydrolase MptA.